Consider the following 935-residue polypeptide: LPS-assembly protein LptD (935 aa).

The first 33 residues, 1-33, serve as a signal peptide directing secretion; that stretch reads MALKSPAFRRKFPLLVTGGLLALQPLATSYVVA. The tract at residues 52 to 85 is disordered; the sequence is KTPVNNLPPRPVHEGAAVSSGTEAAGEAETADRP. A compositionally biased stretch (low complexity) spans 65-79; the sequence is EGAAVSSGTEAAGEA.

The protein belongs to the LptD family. Component of the lipopolysaccharide transport and assembly complex. Interacts with LptE and LptA.

The protein localises to the cell outer membrane. Together with LptE, is involved in the assembly of lipopolysaccharide (LPS) at the surface of the outer membrane. This is LPS-assembly protein LptD from Pseudomonas putida (strain ATCC 700007 / DSM 6899 / JCM 31910 / BCRC 17059 / LMG 24140 / F1).